Reading from the N-terminus, the 445-residue chain is Glucose-6-phosphate isomerase (445 aa).

Glu-284 serves as the catalytic Proton donor. Active-site residues include His-305 and Lys-419.

It belongs to the GPI family.

It localises to the cytoplasm. The catalysed reaction is alpha-D-glucose 6-phosphate = beta-D-fructose 6-phosphate. It functions in the pathway carbohydrate biosynthesis; gluconeogenesis. It participates in carbohydrate degradation; glycolysis; D-glyceraldehyde 3-phosphate and glycerone phosphate from D-glucose: step 2/4. Functionally, catalyzes the reversible isomerization of glucose-6-phosphate to fructose-6-phosphate. This is Glucose-6-phosphate isomerase from Leptospira interrogans serogroup Icterohaemorrhagiae serovar Lai (strain 56601).